We begin with the raw amino-acid sequence, 913 residues long: Calcium-activated chloride channel regulator 1 (913 aa).

Residues 1–21 (MGSFKSSVFILVLHLLEGALS) form the signal peptide. Residues 46-199 (DETLIQQIKD…DIAGKNVVNH (154 aa)) form a metalloprotease domain region. His-156 is a binding site for Zn(2+). Glu-157 is a catalytic residue. His-160 and Asn-167 together coordinate Zn(2+). Residues 306 to 475 (IVCLVLDKSG…NGLIDAFGAL (170 aa)) enclose the VWFA domain. Residues Asn-503, Asn-514, Asn-770, Asn-804, Asn-810, Asn-836, and Asn-885 are each glycosylated (N-linked (GlcNAc...) asparagine).

The protein belongs to the CLCR family. Post-translationally, glycosylated. In terms of processing, the translation product is autoproteolytically cleaved by the metalloprotease domain in the endoplasmic reticulum into a N-terminal and a C-terminal products that remain physically associated with each other. The cleavage is necessary for calcium-activated chloride channel (CaCC) activation activity. As to expression, expressed in mucin-producing cells in the respiratory and intestinal tracts, cutaneous sweat glands, and renal mucous glands (at protein level). Strong overexpression in the airways of horses with recurrent airway obstruction (at protein level).

It localises to the secreted. Its subcellular location is the extracellular space. May be involved in mediating calcium-activated chloride conductance. May play critical roles in goblet cell metaplasia, mucus hypersecretion, cystic fibrosis and AHR. May be involved in the regulation of mucus production and/or secretion by goblet cells. Involved in the regulation of tissue inflammation in the innate immune response. May play a role as a tumor suppressor. Induces MUC5AC. The protein is Calcium-activated chloride channel regulator 1 (CLCA1) of Equus caballus (Horse).